Reading from the N-terminus, the 1898-residue chain is Receptor-type tyrosine-protein phosphatase F (1898 aa).

A signal peptide spans 1–29 (MAPEPAPGRRMVPLVPALVMLGLMAGAHG). The Extracellular segment spans residues 30–1254 (DSKPVFVKVP…QQQEEPEMLW (1225 aa)). Ig-like C2-type domains are found at residues 33 to 123 (PVFV…AKLS), 135 to 224 (PTID…ANLY), and 232 to 314 (PRFS…AQVT). Residues C54 and C107 are joined by a disulfide bond. 68–77 (KKGKKVSSQR) is a heparin binding site. N117 is a glycosylation site (N-linked (GlcNAc...) asparagine). An intrachain disulfide couples C156 to C207. N250 and N295 each carry an N-linked (GlcNAc...) asparagine glycan. A disulfide bond links C253 and C298. Fibronectin type-III domains lie at 321–411 (PPID…TGEQ), 416–510 (PPRR…TQQG), 514–604 (QPAD…TAQS), 609–706 (PPQK…TDED), 711–810 (PPRK…TTGA), 811–905 (VPGR…PEDA), 909–1001 (FPQN…TMPM), and 1005–1089 (FAKN…TAPD). Positions 693–713 (GPESSPVLVRTDEDVPSGPPR) are disordered. N721 is a glycosylation site (N-linked (GlcNAc...) asparagine). N-linked (GlcNAc...) asparagine glycosylation is found at N941 and N957. Residues 1255 to 1275 (VTGPVLAVILIILIVIAILLF) form a helical membrane-spanning segment. Residues 1276-1898 (KRKRTHSPSS…YLGSFDHYAT (623 aa)) lie on the Cytoplasmic side of the membrane. Phosphoserine is present on S1296. Tyrosine-protein phosphatase domains are found at residues 1343–1598 (FSQE…LLEA) and 1630–1889 (MELE…ALEY). Residues D1507, 1539-1545 (CSAGVGR), and Q1583 each bind substrate. C1539 acts as the Phosphocysteine intermediate in catalysis. C1830 acts as the Phosphocysteine intermediate in catalysis.

The protein belongs to the protein-tyrosine phosphatase family. Receptor class 2A subfamily. In terms of assembly, interacts with GRIP1. Interacts with PPFIA1, PPFIA2 and PPFIA3. Interacts with PTPRF.

The protein resides in the membrane. It carries out the reaction O-phospho-L-tyrosyl-[protein] + H2O = L-tyrosyl-[protein] + phosphate. In terms of biological role, possible cell adhesion receptor. It possesses an intrinsic protein tyrosine phosphatase activity (PTPase) and dephosphorylates EPHA2 regulating its activity. Its function is as follows. The first PTPase domain has enzymatic activity, while the second one seems to affect the substrate specificity of the first one. The polypeptide is Receptor-type tyrosine-protein phosphatase F (Ptprf) (Rattus norvegicus (Rat)).